An 805-amino-acid chain; its full sequence is Probable inorganic carbon transporter subunit DabA (805 aa).

4 residues coordinate Zn(2+): cysteine 334, aspartate 336, histidine 491, and cysteine 506.

It belongs to the inorganic carbon transporter (TC 9.A.2) DabA family. In terms of assembly, forms a complex with DabB. It depends on Zn(2+) as a cofactor.

The protein localises to the cell inner membrane. In terms of biological role, part of an energy-coupled inorganic carbon pump. The polypeptide is Probable inorganic carbon transporter subunit DabA (Ruegeria sp. (strain TM1040) (Silicibacter sp.)).